A 331-amino-acid chain; its full sequence is Olfactory receptor 7D11 (331 aa).

The Extracellular portion of the chain corresponds to methionine 1–proline 25. Asparagine 5 carries N-linked (GlcNAc...) asparagine glycosylation. Residues isoleucine 26–isoleucine 46 form a helical membrane-spanning segment. The Cytoplasmic segment spans residues leucine 47–lysine 57. The helical transmembrane segment at proline 58 to isoleucine 78 threads the bilayer. The Extracellular segment spans residues proline 79–cysteine 97. Cysteine 97 and cysteine 179 form a disulfide bridge. Residues leucine 98 to methionine 118 form a helical membrane-spanning segment. The Cytoplasmic segment spans residues alanine 119 to alanine 142. A helical membrane pass occupies residues leucine 143–methionine 163. The Extracellular segment spans residues asparagine 164–asparagine 196. N-linked (GlcNAc...) asparagine glycosylation is present at asparagine 167. Residues valine 197–serine 217 form a helical membrane-spanning segment. Topologically, residues tyrosine 218–histidine 244 are cytoplasmic. The helical transmembrane segment at leucine 245 to valine 265 threads the bilayer. Topologically, residues histidine 266–arginine 271 are extracellular. Residues lysine 272–leucine 292 traverse the membrane as a helical segment. At arginine 293 to leucine 331 the chain is on the cytoplasmic side.

It belongs to the G-protein coupled receptor 1 family.

It localises to the cell membrane. Functionally, possible olfactory or taste receptor. This chain is Olfactory receptor 7D11, found in Mus musculus (Mouse).